A 344-amino-acid polypeptide reads, in one-letter code: Calcium homeostasis modulator protein 3 (344 aa).

The Cytoplasmic segment spans residues 1-20; the sequence is MDKFRMLFQHFQSSSESVMN. The tract at residues 9–36 is central pore; the sequence is QHFQSSSESVMNGICLLLAAVTVKLYSS. The chain crosses the membrane as a helical span at residues 21–36; it reads GICLLLAAVTVKLYSS. The Extracellular segment spans residues 37-48; that stretch reads FDFNCPCLVHYN. 2 disulfide bridges follow: C41–C126 and C43–C157. The helical transmembrane segment at 49-71 threads the bilayer; it reads ALYGLGLLLTPPLALFLCGLLAN. Over 72–98 the chain is Cytoplasmic; sequence RQSVVMVEEWRRPAGHRRKDPGIIRYM. The S-palmitoyl cysteine moiety is linked to residue C99. Residues 99 to 124 form a helical membrane-spanning segment; it reads CSSVLQRALAAPLVWILLALLDGKCF. Residues 125–176 are Extracellular-facing; the sequence is VCAFSSSVDPEKFLDFANMTPSQVQLFLAKVPCKEDELVRDSPARKAVSRYL. An N-linked (GlcNAc...) asparagine glycan is attached at N142. The helical transmembrane segment at 177–202 threads the bilayer; it reads RCLSQAIGWSVTLLLIIAAFLARCLR. S-palmitoyl cysteine attachment occurs at residues C200 and C204. Residues 203–344 are Cytoplasmic-facing; sequence PCFDQTVFLQ…GTRLSQHTDV (142 aa).

Belongs to the CALHM family. As to quaternary structure, associates with CALHM1 as a pore-forming subunit in a hetero-hexameric channel complex. In terms of processing, N-glycosylated. Palmitoylated by ZDHHC3 and ZDHHC15. Palmitoylation positively regulates CALHM1:CALHM3 channel conductance. In terms of tissue distribution, specifically expressed in circumvallate taste bud cells.

It is found in the basolateral cell membrane. It catalyses the reaction ATP(in) = ATP(out). The enzyme catalyses Ca(2+)(in) = Ca(2+)(out). The catalysed reaction is Na(+)(in) = Na(+)(out). It carries out the reaction K(+)(in) = K(+)(out). It catalyses the reaction chloride(in) = chloride(out). Functionally, pore-forming subunit of gustatory voltage-gated ion channels required for sensory perception of sweet, bitter and umami tastes. With CALHM1 forms a fast-activating voltage-gated ATP-release channel in type II taste bud cells, ATP acting as a neurotransmitter to activate afferent neural gustatory pathways. Acts both as a voltage-gated and calcium-activated ion channel: mediates neuronal excitability in response to membrane depolarization and low extracellular Ca(2+) concentration. Has poor ion selectivity and forms a wide pore (around 14 Angstroms) that mediates permeation of small ions including Ca(2+), Na(+), K(+) and Cl(-), as well as larger ions such as ATP(4-). The sequence is that of Calcium homeostasis modulator protein 3 from Homo sapiens (Human).